The chain runs to 359 residues: Phosphoserine aminotransferase (359 aa).

Serine 9 and arginine 42 together coordinate L-glutamate. Residues 76–77, tryptophan 102, threonine 152, aspartate 171, and glutamine 194 contribute to the pyridoxal 5'-phosphate site; that span reads AS. Lysine 195 carries the post-translational modification N6-(pyridoxal phosphate)lysine. 236-237 contributes to the pyridoxal 5'-phosphate binding site; it reads NT.

It belongs to the class-V pyridoxal-phosphate-dependent aminotransferase family. SerC subfamily. As to quaternary structure, homodimer. Pyridoxal 5'-phosphate is required as a cofactor.

It localises to the cytoplasm. The catalysed reaction is O-phospho-L-serine + 2-oxoglutarate = 3-phosphooxypyruvate + L-glutamate. The enzyme catalyses 4-(phosphooxy)-L-threonine + 2-oxoglutarate = (R)-3-hydroxy-2-oxo-4-phosphooxybutanoate + L-glutamate. It functions in the pathway amino-acid biosynthesis; L-serine biosynthesis; L-serine from 3-phospho-D-glycerate: step 2/3. It participates in cofactor biosynthesis; pyridoxine 5'-phosphate biosynthesis; pyridoxine 5'-phosphate from D-erythrose 4-phosphate: step 3/5. Functionally, catalyzes the reversible conversion of 3-phosphohydroxypyruvate to phosphoserine and of 3-hydroxy-2-oxo-4-phosphonooxybutanoate to phosphohydroxythreonine. In Marinomonas sp. (strain MWYL1), this protein is Phosphoserine aminotransferase.